The chain runs to 228 residues: Phosphoribosylformylglycinamidine synthase subunit PurQ (228 aa).

The Glutamine amidotransferase type-1 domain maps to 3–226 (FAVIVFPGSN…VKYWRETHVV (224 aa)). Cysteine 86 functions as the Nucleophile in the catalytic mechanism. Active-site residues include histidine 195 and glutamate 197.

As to quaternary structure, part of the FGAM synthase complex composed of 1 PurL, 1 PurQ and 2 PurS subunits.

It localises to the cytoplasm. It carries out the reaction N(2)-formyl-N(1)-(5-phospho-beta-D-ribosyl)glycinamide + L-glutamine + ATP + H2O = 2-formamido-N(1)-(5-O-phospho-beta-D-ribosyl)acetamidine + L-glutamate + ADP + phosphate + H(+). The catalysed reaction is L-glutamine + H2O = L-glutamate + NH4(+). The protein operates within purine metabolism; IMP biosynthesis via de novo pathway; 5-amino-1-(5-phospho-D-ribosyl)imidazole from N(2)-formyl-N(1)-(5-phospho-D-ribosyl)glycinamide: step 1/2. Its function is as follows. Part of the phosphoribosylformylglycinamidine synthase complex involved in the purines biosynthetic pathway. Catalyzes the ATP-dependent conversion of formylglycinamide ribonucleotide (FGAR) and glutamine to yield formylglycinamidine ribonucleotide (FGAM) and glutamate. The FGAM synthase complex is composed of three subunits. PurQ produces an ammonia molecule by converting glutamine to glutamate. PurL transfers the ammonia molecule to FGAR to form FGAM in an ATP-dependent manner. PurS interacts with PurQ and PurL and is thought to assist in the transfer of the ammonia molecule from PurQ to PurL. The sequence is that of Phosphoribosylformylglycinamidine synthase subunit PurQ from Geobacillus sp. (strain WCH70).